The following is a 548-amino-acid chain: Probable malate:quinone oxidoreductase (548 aa).

The interval 521 to 548 (DKPQAADSTPKPQLKPQPVQKEVADIAL) is disordered. The span at 530–541 (PKPQLKPQPVQK) shows a compositional bias: low complexity.

This sequence belongs to the MQO family. The cofactor is FAD.

It carries out the reaction (S)-malate + a quinone = a quinol + oxaloacetate. It participates in carbohydrate metabolism; tricarboxylic acid cycle; oxaloacetate from (S)-malate (quinone route): step 1/1. In Escherichia coli (strain 55989 / EAEC), this protein is Probable malate:quinone oxidoreductase.